We begin with the raw amino-acid sequence, 410 residues long: Na(+)/H(+) antiporter NhaS4 (410 aa).

The next 11 helical transmembrane spans lie at 7-27, 33-53, 69-89, 107-127, 135-155, 173-193, 199-219, 241-261, 291-311, 319-339, and 376-396; these read LLIL…GLLF, PPVI…LGLL, FLYL…GLEL, VSIF…LYSL, FIPF…PVLA, LTCA…AIAV, IFGA…MVTL, LLTF…WIGI, FVST…TDLG, WAVC…GVYV, and GVIS…TTII.

Belongs to the monovalent cation:proton antiporter 2 (CPA2) transporter (TC 2.A.37) family.

The protein localises to the membrane. In terms of biological role, na(+)/H(+) antiporter. The polypeptide is Na(+)/H(+) antiporter NhaS4 (nhaS4) (Synechocystis sp. (strain ATCC 27184 / PCC 6803 / Kazusa)).